The sequence spans 163 residues: Nucleotide-binding protein BCG9842_B4128 (163 aa).

The protein belongs to the YajQ family.

Nucleotide-binding protein. This is Nucleotide-binding protein BCG9842_B4128 from Bacillus cereus (strain G9842).